Reading from the N-terminus, the 337-residue chain is Transaldolase (337 aa).

At Lys115 the chain carries N6-acetyllysine. Catalysis depends on Lys142, which acts as the Schiff-base intermediate with substrate. Residue Lys219 is modified to N6-acetyllysine. A phosphoserine mark is found at Ser237 and Ser256. 3 positions are modified to N6-acetyllysine: Lys269, Lys286, and Lys321.

Belongs to the transaldolase family. Type 1 subfamily. In terms of assembly, homodimer.

Its subcellular location is the cytoplasm. The enzyme catalyses D-sedoheptulose 7-phosphate + D-glyceraldehyde 3-phosphate = D-erythrose 4-phosphate + beta-D-fructose 6-phosphate. It functions in the pathway carbohydrate degradation; pentose phosphate pathway; D-glyceraldehyde 3-phosphate and beta-D-fructose 6-phosphate from D-ribose 5-phosphate and D-xylulose 5-phosphate (non-oxidative stage): step 2/3. In terms of biological role, transaldolase is important for the balance of metabolites in the pentose-phosphate pathway. The polypeptide is Transaldolase (TALDO1) (Bos taurus (Bovine)).